The chain runs to 309 residues: Dihydroorotate dehydrogenase B (NAD(+)), catalytic subunit (309 aa).

FMN contacts are provided by residues Ser-21 and 45 to 46 (KA). Substrate contacts are provided by residues Lys-45 and 69–73 (NAIGL). Positions 99 and 127 each coordinate FMN. Residue Asn-127 coordinates substrate. The active-site Nucleophile is the Cys-130. FMN is bound by residues Lys-165 and Ile-191. 192–193 (NT) provides a ligand contact to substrate. FMN contacts are provided by residues Gly-217, 243 to 244 (GG), and 265 to 266 (GT).

The protein belongs to the dihydroorotate dehydrogenase family. Type 1 subfamily. In terms of assembly, heterotetramer of 2 PyrK and 2 PyrD type B subunits. Requires FMN as cofactor.

It localises to the cytoplasm. It carries out the reaction (S)-dihydroorotate + NAD(+) = orotate + NADH + H(+). Its pathway is pyrimidine metabolism; UMP biosynthesis via de novo pathway; orotate from (S)-dihydroorotate (NAD(+) route): step 1/1. Catalyzes the conversion of dihydroorotate to orotate with NAD(+) as electron acceptor. In Bacillus cereus (strain AH187), this protein is Dihydroorotate dehydrogenase B (NAD(+)), catalytic subunit (pyrD).